Consider the following 300-residue polypeptide: 4-hydroxy-tetrahydrodipicolinate synthase (300 aa).

Pyruvate is bound at residue Thr-45. The Proton donor/acceptor role is filled by Tyr-140. Lys-169 acts as the Schiff-base intermediate with substrate in catalysis. Pyruvate is bound at residue Ile-210.

This sequence belongs to the DapA family. In terms of assembly, homotetramer; dimer of dimers.

It is found in the cytoplasm. It catalyses the reaction L-aspartate 4-semialdehyde + pyruvate = (2S,4S)-4-hydroxy-2,3,4,5-tetrahydrodipicolinate + H2O + H(+). The protein operates within amino-acid biosynthesis; L-lysine biosynthesis via DAP pathway; (S)-tetrahydrodipicolinate from L-aspartate: step 3/4. In terms of biological role, catalyzes the condensation of (S)-aspartate-beta-semialdehyde [(S)-ASA] and pyruvate to 4-hydroxy-tetrahydrodipicolinate (HTPA). This Helicobacter pylori (strain HPAG1) protein is 4-hydroxy-tetrahydrodipicolinate synthase.